The primary structure comprises 340 residues: Probable protein phosphatase 2C 21 (340 aa).

Positions 1–21 (MGASPSRPLEQSPSSSEGENH) are disordered. Residues 24–305 (KYASYTTQGF…DNATAILVKF (282 aa)) enclose the PPM-type phosphatase domain. Mn(2+)-binding residues include Asp-58, Gly-59, Asp-254, and Asp-296. The segment at 311–340 (DPDEVASARDEHQHNPEGGDEKLDINNDND) is disordered. Residues 316-340 (ASARDEHQHNPEGGDEKLDINNDND) are compositionally biased toward basic and acidic residues.

This sequence belongs to the PP2C family. Mg(2+) serves as cofactor. Mn(2+) is required as a cofactor.

The enzyme catalyses O-phospho-L-seryl-[protein] + H2O = L-seryl-[protein] + phosphate. It carries out the reaction O-phospho-L-threonyl-[protein] + H2O = L-threonyl-[protein] + phosphate. This chain is Probable protein phosphatase 2C 21, found in Oryza sativa subsp. japonica (Rice).